Reading from the N-terminus, the 335-residue chain is NADH-quinone oxidoreductase subunit H (335 aa).

A run of 8 helical transmembrane segments spans residues 12–32, 81–101, 114–134, 154–174, 187–207, 238–258, 270–290, and 307–327; these read IIAV…GALL, VIFT…FAVI, IGLL…LFAG, VSYE…VGSF, LWFI…GVAV, FFVG…TLFF, SLAF…FILL, and WKFC…IVLL.

Belongs to the complex I subunit 1 family. As to quaternary structure, NDH-1 is composed of 13 different subunits. Subunits NuoA, H, J, K, L, M, N constitute the membrane sector of the complex.

The protein localises to the cell inner membrane. It catalyses the reaction a quinone + NADH + 5 H(+)(in) = a quinol + NAD(+) + 4 H(+)(out). In terms of biological role, NDH-1 shuttles electrons from NADH, via FMN and iron-sulfur (Fe-S) centers, to quinones in the respiratory chain. The immediate electron acceptor for the enzyme in this species is believed to be ubiquinone. Couples the redox reaction to proton translocation (for every two electrons transferred, four hydrogen ions are translocated across the cytoplasmic membrane), and thus conserves the redox energy in a proton gradient. This subunit may bind ubiquinone. This Pseudomonas syringae pv. tomato (strain ATCC BAA-871 / DC3000) protein is NADH-quinone oxidoreductase subunit H.